The sequence spans 343 residues: Fructose-1,6-bisphosphatase class 1 (343 aa).

Mg(2+) is bound by residues glutamate 90, aspartate 109, leucine 111, and aspartate 112. Residues 112–115 (DGSS) and asparagine 199 each bind substrate. Glutamate 271 contributes to the Mg(2+) binding site.

This sequence belongs to the FBPase class 1 family. As to quaternary structure, homotetramer. Requires Mg(2+) as cofactor.

The protein localises to the cytoplasm. It catalyses the reaction beta-D-fructose 1,6-bisphosphate + H2O = beta-D-fructose 6-phosphate + phosphate. It participates in carbohydrate biosynthesis; Calvin cycle. This chain is Fructose-1,6-bisphosphatase class 1, found in Rhodopseudomonas palustris (strain HaA2).